Reading from the N-terminus, the 324-residue chain is UDP-galactose transporter homolog 1 (324 aa).

Transmembrane regions (helical) follow at residues 7–27 (LVIA…AQEP) and 42–62 (HSSF…LCYL). N-linked (GlcNAc...) asparagine glycosylation occurs at Asn-97. Helical transmembrane passes span 106–126 (VGYM…HVLV), 135–155 (KALV…GGAE), 161–181 (ASLY…LTNA), 199–219 (HLMV…LVLF), 237–257 (ILTY…FVFF), 265–285 (LVLA…SIVV), and 290–310 (VRPV…WETV).

This sequence belongs to the nucleotide-sugar transporter family. SLC35B subfamily.

The protein localises to the endoplasmic reticulum membrane. Its function is as follows. May be involved in specific transport of UDP-Gal from the cytosol to the Golgi lumen. Involved in the maintenance of optimal conditions for the folding of secretory pathway proteins in the endoplasmic reticulum. This chain is UDP-galactose transporter homolog 1 (HUT1), found in Eremothecium gossypii (strain ATCC 10895 / CBS 109.51 / FGSC 9923 / NRRL Y-1056) (Yeast).